Consider the following 1025-residue polypeptide: Probable beta-galactosidase B (1025 aa).

The first 21 residues, 1 to 21, serve as a signal peptide directing secretion; it reads MATAFWLLLFLLGSLHVLTAA. An N-linked (GlcNAc...) asparagine glycan is attached at asparagine 23. Residue tyrosine 90 coordinates substrate. An N-linked (GlcNAc...) asparagine glycan is attached at asparagine 100. The substrate site is built by asparagine 135, alanine 136, glutamate 137, and asparagine 195. The active-site Proton donor is glutamate 196. Asparagine 211 is a glycosylation site (N-linked (GlcNAc...) asparagine). Tyrosine 265 is a substrate binding site. Cysteine 271 and cysteine 324 are disulfide-bonded. Glutamate 308 acts as the Nucleophile in catalysis. Residue tyrosine 373 coordinates substrate. N-linked (GlcNAc...) asparagine glycans are attached at residues asparagine 411, asparagine 456, asparagine 736, asparagine 776, asparagine 884, asparagine 925, and asparagine 926.

The protein belongs to the glycosyl hydrolase 35 family.

The protein localises to the secreted. The enzyme catalyses Hydrolysis of terminal non-reducing beta-D-galactose residues in beta-D-galactosides.. Its function is as follows. Cleaves beta-linked terminal galactosyl residues from gangliosides, glycoproteins, and glycosaminoglycans. This Emericella nidulans (strain FGSC A4 / ATCC 38163 / CBS 112.46 / NRRL 194 / M139) (Aspergillus nidulans) protein is Probable beta-galactosidase B (lacB).